Here is a 136-residue protein sequence, read N- to C-terminus: ATP synthase epsilon chain, plastid (136 aa).

Belongs to the ATPase epsilon chain family. As to quaternary structure, F-type ATPases have 2 components, CF(1) - the catalytic core - and CF(0) - the membrane proton channel. CF(1) has five subunits: alpha(3), beta(3), gamma(1), delta(1), epsilon(1). CF(0) has three main subunits: a, b and c.

It localises to the plastid thylakoid membrane. In terms of biological role, produces ATP from ADP in the presence of a proton gradient across the membrane. The chain is ATP synthase epsilon chain, plastid from Cuscuta reflexa (Southern Asian dodder).